The primary structure comprises 176 residues: Ribosome rescue factor SmrB (176 aa).

Residues 97–172 (LDMHGMTQQE…GDGALLVLLS (76 aa)) form the Smr domain.

Belongs to the SmrB family. Associates with collided ribosomes, but not with correctly translating polysomes.

Functionally, acts as a ribosome collision sensor. Detects stalled/collided disomes (pairs of ribosomes where the leading ribosome is stalled and a second ribosome has collided with it) and endonucleolytically cleaves mRNA at the 5' boundary of the stalled ribosome. Stalled/collided disomes form a new interface (primarily via the 30S subunits) that binds SmrB. Cleaved mRNA becomes available for tmRNA ligation, leading to ribosomal subunit dissociation and rescue of stalled ribosomes. This chain is Ribosome rescue factor SmrB, found in Vibrio campbellii (strain ATCC BAA-1116).